The primary structure comprises 254 residues: Arginine/ornithine transport ATP-binding protein AotP (254 aa).

Positions 4–249 (LEVQDLHKRY…PQSDRLKQFL (246 aa)) constitute an ABC transporter domain. 36–43 (GSSGSGKS) is a binding site for ATP.

Belongs to the ABC transporter superfamily.

It is found in the cell inner membrane. Part of the arginine-inducible binding-protein-dependent transport system for arginine and ornithine. Probably responsible for energy coupling to the transport system. The chain is Arginine/ornithine transport ATP-binding protein AotP (aotP) from Pseudomonas aeruginosa (strain ATCC 15692 / DSM 22644 / CIP 104116 / JCM 14847 / LMG 12228 / 1C / PRS 101 / PAO1).